Consider the following 196-residue polypeptide: Carnitine operon protein CaiE (196 aa).

Residues 173-196 (TQPLRQMEENRPRLQGTTDVTPKR) form a disordered region. Residues 187–196 (QGTTDVTPKR) show a composition bias toward polar residues.

Belongs to the transferase hexapeptide repeat family.

The protein operates within amine and polyamine metabolism; carnitine metabolism. Overproduction of CaiE stimulates the activity of CaiB and CaiD. The protein is Carnitine operon protein CaiE of Shigella flexneri serotype 5b (strain 8401).